The chain runs to 210 residues: Thymidylate kinase (210 aa).

Residue glycine 10–threonine 17 coordinates ATP.

The protein belongs to the thymidylate kinase family.

It catalyses the reaction dTMP + ATP = dTDP + ADP. Phosphorylation of dTMP to form dTDP in both de novo and salvage pathways of dTTP synthesis. The protein is Thymidylate kinase of Geobacillus sp. (strain WCH70).